A 427-amino-acid polypeptide reads, in one-letter code: Enolase 2 (427 aa).

(2R)-2-phosphoglycerate is bound at residue glutamine 163. Catalysis depends on glutamate 205, which acts as the Proton donor. Residues aspartate 242, glutamate 285, and aspartate 312 each coordinate Mg(2+). (2R)-2-phosphoglycerate is bound by residues lysine 337, arginine 366, serine 367, and lysine 388. Residue lysine 337 is the Proton acceptor of the active site.

Belongs to the enolase family. Component of the RNA degradosome, a multiprotein complex involved in RNA processing and mRNA degradation. It depends on Mg(2+) as a cofactor.

Its subcellular location is the cytoplasm. It localises to the secreted. The protein localises to the cell surface. It carries out the reaction (2R)-2-phosphoglycerate = phosphoenolpyruvate + H2O. It participates in carbohydrate degradation; glycolysis; pyruvate from D-glyceraldehyde 3-phosphate: step 4/5. Catalyzes the reversible conversion of 2-phosphoglycerate (2-PG) into phosphoenolpyruvate (PEP). It is essential for the degradation of carbohydrates via glycolysis. This Methylococcus capsulatus (strain ATCC 33009 / NCIMB 11132 / Bath) protein is Enolase 2.